Consider the following 252-residue polypeptide: 2-succinyl-6-hydroxy-2,4-cyclohexadiene-1-carboxylate synthase (252 aa).

This sequence belongs to the AB hydrolase superfamily. MenH family. Monomer.

The catalysed reaction is 5-enolpyruvoyl-6-hydroxy-2-succinyl-cyclohex-3-ene-1-carboxylate = (1R,6R)-6-hydroxy-2-succinyl-cyclohexa-2,4-diene-1-carboxylate + pyruvate. It functions in the pathway quinol/quinone metabolism; 1,4-dihydroxy-2-naphthoate biosynthesis; 1,4-dihydroxy-2-naphthoate from chorismate: step 3/7. Its pathway is quinol/quinone metabolism; menaquinone biosynthesis. Its function is as follows. Catalyzes a proton abstraction reaction that results in 2,5-elimination of pyruvate from 2-succinyl-5-enolpyruvyl-6-hydroxy-3-cyclohexene-1-carboxylate (SEPHCHC) and the formation of 2-succinyl-6-hydroxy-2,4-cyclohexadiene-1-carboxylate (SHCHC). This chain is 2-succinyl-6-hydroxy-2,4-cyclohexadiene-1-carboxylate synthase, found in Escherichia coli (strain K12 / MC4100 / BW2952).